A 350-amino-acid chain; its full sequence is UDP-N-acetylenolpyruvoylglucosamine reductase (350 aa).

One can recognise an FAD-binding PCMH-type domain in the interval 24-195 (HVDATARWLL…VAVEFNLPLL (172 aa)). Residue Arg172 is part of the active site. The active-site Proton donor is Ser245. Residue Glu342 is part of the active site.

This sequence belongs to the MurB family. It depends on FAD as a cofactor.

Its subcellular location is the cytoplasm. It catalyses the reaction UDP-N-acetyl-alpha-D-muramate + NADP(+) = UDP-N-acetyl-3-O-(1-carboxyvinyl)-alpha-D-glucosamine + NADPH + H(+). It functions in the pathway cell wall biogenesis; peptidoglycan biosynthesis. In terms of biological role, cell wall formation. The protein is UDP-N-acetylenolpyruvoylglucosamine reductase of Xanthomonas campestris pv. campestris (strain 8004).